Consider the following 438-residue polypeptide: Serine hydroxymethyltransferase (438 aa).

Residues Leu133 and 137 to 139 contribute to the (6S)-5,6,7,8-tetrahydrofolate site; that span reads GHL. N6-(pyridoxal phosphate)lysine is present on Lys242.

The protein belongs to the SHMT family. In terms of assembly, homodimer. Pyridoxal 5'-phosphate is required as a cofactor.

It is found in the cytoplasm. It carries out the reaction (6R)-5,10-methylene-5,6,7,8-tetrahydrofolate + glycine + H2O = (6S)-5,6,7,8-tetrahydrofolate + L-serine. It functions in the pathway one-carbon metabolism; tetrahydrofolate interconversion. It participates in amino-acid biosynthesis; glycine biosynthesis; glycine from L-serine: step 1/1. Its function is as follows. Catalyzes the reversible interconversion of serine and glycine with tetrahydrofolate (THF) serving as the one-carbon carrier. This reaction serves as the major source of one-carbon groups required for the biosynthesis of purines, thymidylate, methionine, and other important biomolecules. Also exhibits THF-independent aldolase activity toward beta-hydroxyamino acids, producing glycine and aldehydes, via a retro-aldol mechanism. The chain is Serine hydroxymethyltransferase from Brucella abortus (strain S19).